Consider the following 360-residue polypeptide: Protein RecA (360 aa).

64 to 71 (GHESSGKT) provides a ligand contact to ATP. Residues 333–360 (QEQVQPEPKSKQSKSKQASEQATQDELI) form a disordered region.

The protein belongs to the RecA family.

Its subcellular location is the cytoplasm. Can catalyze the hydrolysis of ATP in the presence of single-stranded DNA, the ATP-dependent uptake of single-stranded DNA by duplex DNA, and the ATP-dependent hybridization of homologous single-stranded DNAs. It interacts with LexA causing its activation and leading to its autocatalytic cleavage. The sequence is that of Protein RecA from Francisella philomiragia subsp. philomiragia (strain ATCC 25017 / CCUG 19701 / FSC 153 / O#319-036).